The chain runs to 258 residues: Ciliogenesis and planar polarity effector 2 (258 aa).

The segment at 51–258 (IDTASYKIFV…LPSSPESAPG (208 aa)) is small GTPase-like. Positions 64, 65, 67, 68, 69, 70, 82, 84, 87, 176, 178, and 206 each coordinate GTP.

This sequence belongs to the small GTPase superfamily. Rab family. As to quaternary structure, interacts with FUZ. Associates with the CPLANE (ciliogenesis and planar polarity effectors) complex via its interaction with FUZ.

The protein resides in the cytoplasm. It localises to the cytoskeleton. Its subcellular location is the cilium basal body. It is found in the microtubule organizing center. The protein localises to the centrosome. The protein resides in the centriole. Required for efficient primary cilia initiation, regulating a late step in cilia initiation. Plays a role in the final maturation of the mother centriole and ciliary vesicle that allows extension of the ciliary axoneme. The chain is Ciliogenesis and planar polarity effector 2 (Cplane2) from Mus musculus (Mouse).